We begin with the raw amino-acid sequence, 409 residues long: BRCA1-A complex subunit Abraxas 1 (409 aa).

Positions 7–160 constitute an MPN domain; that stretch reads SAVLSGFVLG…HSLYKPQKGL (154 aa). Position 48 is a phosphoserine (serine 48). Positions 206–260 form a coiled coil; sequence DGSLKEVHKINEMYASLQEELKSICKKVEDSEQAVDKLVKDVNRLKREIEKRRGA. Basic and acidic residues predominate over residues 362–372; the sequence is LLDTQDKRSKA. The interval 362–409 is disordered; the sequence is LLDTQDKRSKADTGSSNQDKASKMSSPETDEEIEKMKGFGEYSRSPTF. A compositionally biased stretch (polar residues) spans 373-388; that stretch reads DTGSSNQDKASKMSSP. A phosphoserine mark is found at serine 386 and serine 387. A Phosphothreonine modification is found at threonine 390. Phosphoserine occurs at positions 404 and 406. A pSXXF motif motif is present at residues 406 to 409; it reads SPTF.

Belongs to the FAM175 family. Abraxas subfamily. In terms of assembly, component of the ARISC complex, at least composed of UIMC1/RAP80, ABRAXAS1, BRCC3/BRCC36, BABAM2 and BABAM1/NBA1. Component of the BRCA1-A complex, at least composed of BRCA1, BARD1, UIMC1/RAP80, ABRAXAS1, BRCC3/BRCC36, BABAM2 and BABAM1/NBA1. In the complex, interacts directly with UIMC1/RAP80, BRCC3/BRCC36 and BABAM2. Interacts directly (when phosphorylated at Ser-406) with BRCA1. Homodimer. The homodimer interacts directly (when phosphorylated at Ser-404 and Ser-406) with two BRCA1 chains, giving rise to a heterotetramer. Binds polyubiquitin. In terms of processing, phosphorylation of Ser-406 of the pSXXF motif by ATM or ATR constitutes a specific recognition motif for the BRCT domain of BRCA1. Ionizing radiation promotes rapid phosphorylation at Ser-404 and Ser-406 by ATM; this promotes recruitment of BRCA1 to sites of DNA damage.

It is found in the nucleus. Functionally, involved in DNA damage response and double-strand break (DSB) repair. Component of the BRCA1-A complex, acting as a central scaffold protein that assembles the various components of the complex and mediates the recruitment of BRCA1. The BRCA1-A complex specifically recognizes 'Lys-63'-linked ubiquitinated histones H2A and H2AX at DNA lesion sites, leading to target the BRCA1-BARD1 heterodimer to sites of DNA damage at DSBs. This complex also possesses deubiquitinase activity that specifically removes 'Lys-63'-linked ubiquitin on histones H2A and H2AX. This Homo sapiens (Human) protein is BRCA1-A complex subunit Abraxas 1.